Consider the following 346-residue polypeptide: Holliday junction branch migration complex subunit RuvB (346 aa).

The tract at residues 1–182 (MSEAARLIAP…FGIPVRLNFY (182 aa)) is large ATPase domain (RuvB-L). ATP contacts are provided by residues Leu-21, Arg-22, Gly-63, Lys-66, Thr-67, Thr-68, 129–131 (EDF), Arg-172, Tyr-182, and Arg-219. Thr-67 contributes to the Mg(2+) binding site. The segment at 183–253 (TVEELELIVR…IADEALTRLL (71 aa)) is small ATPAse domain (RuvB-S). The tract at residues 256–346 (SMGLDQLDRR…SQFRLTLEDD (91 aa)) is head domain (RuvB-H). Residues Arg-292, Arg-311, and Arg-316 each coordinate DNA.

This sequence belongs to the RuvB family. In terms of assembly, homohexamer. Forms an RuvA(8)-RuvB(12)-Holliday junction (HJ) complex. HJ DNA is sandwiched between 2 RuvA tetramers; dsDNA enters through RuvA and exits via RuvB. An RuvB hexamer assembles on each DNA strand where it exits the tetramer. Each RuvB hexamer is contacted by two RuvA subunits (via domain III) on 2 adjacent RuvB subunits; this complex drives branch migration. In the full resolvosome a probable DNA-RuvA(4)-RuvB(12)-RuvC(2) complex forms which resolves the HJ.

The protein localises to the cytoplasm. The catalysed reaction is ATP + H2O = ADP + phosphate + H(+). In terms of biological role, the RuvA-RuvB-RuvC complex processes Holliday junction (HJ) DNA during genetic recombination and DNA repair, while the RuvA-RuvB complex plays an important role in the rescue of blocked DNA replication forks via replication fork reversal (RFR). RuvA specifically binds to HJ cruciform DNA, conferring on it an open structure. The RuvB hexamer acts as an ATP-dependent pump, pulling dsDNA into and through the RuvAB complex. RuvB forms 2 homohexamers on either side of HJ DNA bound by 1 or 2 RuvA tetramers; 4 subunits per hexamer contact DNA at a time. Coordinated motions by a converter formed by DNA-disengaged RuvB subunits stimulates ATP hydrolysis and nucleotide exchange. Immobilization of the converter enables RuvB to convert the ATP-contained energy into a lever motion, pulling 2 nucleotides of DNA out of the RuvA tetramer per ATP hydrolyzed, thus driving DNA branch migration. The RuvB motors rotate together with the DNA substrate, which together with the progressing nucleotide cycle form the mechanistic basis for DNA recombination by continuous HJ branch migration. Branch migration allows RuvC to scan DNA until it finds its consensus sequence, where it cleaves and resolves cruciform DNA. This Sinorhizobium medicae (strain WSM419) (Ensifer medicae) protein is Holliday junction branch migration complex subunit RuvB.